The following is a 103-amino-acid chain: Large ribosomal subunit protein uL24 (103 aa).

Belongs to the universal ribosomal protein uL24 family. Part of the 50S ribosomal subunit.

In terms of biological role, one of two assembly initiator proteins, it binds directly to the 5'-end of the 23S rRNA, where it nucleates assembly of the 50S subunit. One of the proteins that surrounds the polypeptide exit tunnel on the outside of the subunit. This Haemophilus ducreyi (strain 35000HP / ATCC 700724) protein is Large ribosomal subunit protein uL24.